The following is a 210-amino-acid chain: Redox-sensing transcriptional repressor Rex (210 aa).

The H-T-H motif DNA-binding region spans 17-56 (KYHRYLGDLLDRDIQRISSKELSDIIGFTASQIRQDLNNF). 91–96 (GAGNLG) contributes to the NAD(+) binding site.

It belongs to the transcriptional regulatory Rex family. Homodimer.

Its subcellular location is the cytoplasm. Modulates transcription in response to changes in cellular NADH/NAD(+) redox state. In Clostridioides difficile (strain 630) (Peptoclostridium difficile), this protein is Redox-sensing transcriptional repressor Rex.